A 71-amino-acid polypeptide reads, in one-letter code: Virion membrane protein A13 homolog (71 aa).

Residues 1–21 form a helical membrane-spanning segment; sequence MGIIDTFVITAVTVIIFCLLI. At 22–70 the chain is on the virion surface side; the sequence is YAAYKRYKCIPSPDDRDKVLKSTLNDDTLFNQTLTPDQVKALHRLVTSS.

The protein belongs to the chordopoxvirinae A13 family.

The protein resides in the virion membrane. Its function is as follows. Essential for the encapsidation of DNA into immature virions (IV) and the subsequent maturation of IV into mature virions (MV). This Vertebrata (FPV) protein is Virion membrane protein A13 homolog.